Here is a 428-residue protein sequence, read N- to C-terminus: Elongation factor 1-alpha (428 aa).

One can recognise a tr-type G domain in the interval 5-217 (KPHVNIVFIG…DQIPEPEKPV (213 aa)). Residues 14-21 (GHVDHGKS) are G1. 14–21 (GHVDHGKS) is a binding site for GTP. S21 is a binding site for Mg(2+). Residues 68–72 (GITID) form a G2 region. The interval 89–92 (DAPG) is G3. GTP-binding positions include 89 to 93 (DAPGH) and 144 to 147 (NKMD). The interval 144–147 (NKMD) is G4. The interval 181 to 183 (SAW) is G5.

Belongs to the TRAFAC class translation factor GTPase superfamily. Classic translation factor GTPase family. EF-Tu/EF-1A subfamily.

It localises to the cytoplasm. The catalysed reaction is GTP + H2O = GDP + phosphate + H(+). In terms of biological role, GTP hydrolase that promotes the GTP-dependent binding of aminoacyl-tRNA to the A-site of ribosomes during protein biosynthesis. This chain is Elongation factor 1-alpha, found in Pyrococcus abyssi (strain GE5 / Orsay).